Consider the following 460-residue polypeptide: Probable carboxypeptidase ARB_01041 (460 aa).

The signal sequence occupies residues 1 to 22 (MQKTYIWALVSLLASSLVDARS). N-linked (GlcNAc...) asparagine glycosylation occurs at Asn98. Residue Asp175 coordinates Zn(2+). Glu207 functions as the Proton acceptor in the catalytic mechanism. Glu208 contacts Zn(2+). Asn395 is a glycosylation site (N-linked (GlcNAc...) asparagine).

It belongs to the peptidase M20A family. Zn(2+) is required as a cofactor.

The protein resides in the secreted. This Arthroderma benhamiae (strain ATCC MYA-4681 / CBS 112371) (Trichophyton mentagrophytes) protein is Probable carboxypeptidase ARB_01041.